A 149-amino-acid polypeptide reads, in one-letter code: Large-conductance mechanosensitive channel (149 aa).

A run of 2 helical transmembrane segments spans residues 14–34 (VVDM…VNTL) and 85–105 (GLFI…YLLV).

The protein belongs to the MscL family. In terms of assembly, homopentamer.

The protein localises to the cell inner membrane. Channel that opens in response to stretch forces in the membrane lipid bilayer. May participate in the regulation of osmotic pressure changes within the cell. This chain is Large-conductance mechanosensitive channel, found in Chlorobium phaeovibrioides (strain DSM 265 / 1930) (Prosthecochloris vibrioformis (strain DSM 265)).